Consider the following 404-residue polypeptide: Multidrug resistance protein MdtG (404 aa).

11 consecutive transmembrane segments (helical) span residues 19–39 (LGCF…PLYV), 56–76 (LVFS…GGLA), 90–110 (LGMA…QFLI), 113–133 (ALLG…ATQV), 144–164 (TLST…GLLA), 171–191 (PVFF…FFFI), 222–242 (LFVT…ILTL), 254–274 (IAFI…LSAP), 288–308 (ILIV…FVQT), 317–337 (FLLG…LVYN), and 376–396 (AVFC…WNSL).

This sequence belongs to the major facilitator superfamily. DHA1 family. MdtG (TC 2.A.1.2.20) subfamily.

The protein localises to the cell inner membrane. The protein is Multidrug resistance protein MdtG of Salmonella choleraesuis (strain SC-B67).